The sequence spans 297 residues: Tyrosine recombinase XerC (297 aa).

The region spanning 1–83 (MAILDEFDEH…AVKAFTAWAK (83 aa)) is the Core-binding (CB) domain. The 188-residue stretch at 104–291 (TLPAVLRQDQ…AVSRLRVVHD (188 aa)) folds into the Tyr recombinase domain. Catalysis depends on residues arginine 148, lysine 172, histidine 243, arginine 246, and histidine 269. Tyrosine 278 serves as the catalytic O-(3'-phospho-DNA)-tyrosine intermediate.

This sequence belongs to the 'phage' integrase family. XerC subfamily. As to quaternary structure, forms a cyclic heterotetrameric complex composed of two molecules of XerC and two molecules of XerD.

The protein resides in the cytoplasm. Site-specific tyrosine recombinase, which acts by catalyzing the cutting and rejoining of the recombining DNA molecules. The XerC-XerD complex is essential to convert dimers of the bacterial chromosome into monomers to permit their segregation at cell division. It also contributes to the segregational stability of plasmids. The chain is Tyrosine recombinase XerC from Mycobacterium leprae (strain TN).